The primary structure comprises 185 residues: 3-hexulose-6-phosphate isomerase (185 aa).

One can recognise an SIS domain in the interval 29-172; sequence LADHILSSHQ…ILKLMEKKGL (144 aa). Residues Ser47 and 86–91 each bind substrate; that span reads SGSGET. The active-site Proton acceptor is Glu152.

The protein belongs to the SIS family. PHI subfamily. Homotetramer.

It catalyses the reaction D-arabino-hex-3-ulose 6-phosphate = beta-D-fructose 6-phosphate. Its pathway is one-carbon metabolism; formaldehyde assimilation via RuMP pathway; D-fructose 6-phosphate from D-ribulose 5-phosphate and formaldehyde: step 2/2. Its function is as follows. Catalyzes the isomerization between 3-hexulose 6-phosphate and fructose 6-phosphate. Together with HxlA, may act as a formaldehyde detoxification system. The polypeptide is 3-hexulose-6-phosphate isomerase (hxlB) (Bacillus subtilis (strain 168)).